The sequence spans 485 residues: Aspartyl/glutamyl-tRNA(Asn/Gln) amidotransferase subunit B (485 aa).

It belongs to the GatB/GatE family. GatB subfamily. Heterotrimer of A, B and C subunits.

It carries out the reaction L-glutamyl-tRNA(Gln) + L-glutamine + ATP + H2O = L-glutaminyl-tRNA(Gln) + L-glutamate + ADP + phosphate + H(+). The catalysed reaction is L-aspartyl-tRNA(Asn) + L-glutamine + ATP + H2O = L-asparaginyl-tRNA(Asn) + L-glutamate + ADP + phosphate + 2 H(+). Functionally, allows the formation of correctly charged Asn-tRNA(Asn) or Gln-tRNA(Gln) through the transamidation of misacylated Asp-tRNA(Asn) or Glu-tRNA(Gln) in organisms which lack either or both of asparaginyl-tRNA or glutaminyl-tRNA synthetases. The reaction takes place in the presence of glutamine and ATP through an activated phospho-Asp-tRNA(Asn) or phospho-Glu-tRNA(Gln). This is Aspartyl/glutamyl-tRNA(Asn/Gln) amidotransferase subunit B from Cupriavidus pinatubonensis (strain JMP 134 / LMG 1197) (Cupriavidus necator (strain JMP 134)).